Consider the following 710-residue polypeptide: U3 small nucleolar RNA-associated protein 4 (710 aa).

9 WD repeats span residues 11–59, 64–105, 108–147, 154–192, 199–241, 290–327, 328–365, 488–527, and 529–569; these read YTPS…CLKT, GVDR…PLVN, SNAG…GVIE, RQTS…SAII, RARK…LSQS, FHSH…RQFN, RKNH…LWRI, SMCD…YSEL, and RVNT…LSEW.

As to quaternary structure, component of the ribosomal small subunit (SSU) processome.

It localises to the nucleus. The protein resides in the nucleolus. Involved in nucleolar processing of pre-18S ribosomal RNA. Required for optimal pre-ribosomal RNA transcription by RNA polymerase I together with a subset of U3 proteins required for transcription (t-UTPs). The sequence is that of U3 small nucleolar RNA-associated protein 4 (utp4) from Schizosaccharomyces pombe (strain 972 / ATCC 24843) (Fission yeast).